The chain runs to 1328 residues: Fanconi anemia group I protein (1328 aa).

At Ser407 the chain carries Phosphoserine. A Glycyl lysine isopeptide (Lys-Gly) (interchain with G-Cter in ubiquitin) cross-link involves residue Lys523. 2 positions are modified to phosphoserine: Ser556 and Ser730. The residue at position 952 (Thr952) is a Phosphothreonine. Phosphoserine is present on Ser1121. The tract at residues Glu1300–Lys1328 is disordered. Positions Asp1301 to Thr1310 are enriched in acidic residues.

The protein belongs to the Fanconi anemia group I protein family. In terms of assembly, homodimer. Part of a FANCI-FANCD2 heterodimeric complex that binds and scans dsDNA for DNA damage. Interacts with FANCL. Interacts with MTMR15/FAN1. Interacts with POLN. Interacts with UBL5; the interaction promotes FANCI homodimerization. In terms of processing, monoubiquitinated by FANCL on Lys-523 during S phase and upon genotoxic stress. Deubiquitinated by USP1 as cells enter G2/M, or once DNA repair is completed. Monoubiquitination requires the FANCA-FANCB-FANCC-FANCE-FANCF-FANCG-FANCM complex. Ubiquitination is required for binding to chromatin, DNA repair, and normal cell cycle progression. Monoubiquitination is stimulated by DNA-binding. Post-translationally, phosphorylated in response to DNA damage by ATM and/or ATR. Phosphorylation of FANCI promotes ubiquitination of FANCD2, which prevents DNA release from the FANCI-FANCD2 complex.

It is found in the nucleus. The protein resides in the cytoplasm. Functionally, plays an essential role in the repair of DNA double-strand breaks by homologous recombination and in the repair of interstrand DNA cross-links (ICLs) by promoting FANCD2 monoubiquitination by FANCL and participating in recruitment to DNA repair sites. The FANCI-FANCD2 complex binds and scans double-stranded DNA (dsDNA) for DNA damage; this complex stalls at DNA junctions between double-stranded DNA and single-stranded DNA. Participates in S phase and G2 phase checkpoint activation upon DNA damage. The sequence is that of Fanconi anemia group I protein (FANCI) from Homo sapiens (Human).